The chain runs to 130 residues: UPF0251 protein MmarC6_0272 (130 aa).

This sequence belongs to the UPF0251 family.

The polypeptide is UPF0251 protein MmarC6_0272 (Methanococcus maripaludis (strain C6 / ATCC BAA-1332)).